Consider the following 636-residue polypeptide: Chaperone protein DnaK (636 aa).

Thr-197 is subject to Phosphothreonine; by autocatalysis. Low complexity predominate over residues 596 to 607 (LYQQAQEQQQSG). The tract at residues 596-636 (LYQQAQEQQQSGSSGGSSDEDVVEDAEIVDEEDEEKRDDNR) is disordered. Acidic residues predominate over residues 613–636 (SDEDVVEDAEIVDEEDEEKRDDNR).

The protein belongs to the heat shock protein 70 family.

Its function is as follows. Acts as a chaperone. This is Chaperone protein DnaK from Rubrobacter xylanophilus (strain DSM 9941 / JCM 11954 / NBRC 16129 / PRD-1).